A 247-amino-acid chain; its full sequence is Carboxy-S-adenosyl-L-methionine synthase (247 aa).

Residues Y39, 89 to 90 (DN), 117 to 118 (DI), N132, and R199 contribute to the S-adenosyl-L-methionine site.

The protein belongs to the class I-like SAM-binding methyltransferase superfamily. Cx-SAM synthase family. In terms of assembly, homodimer.

The enzyme catalyses prephenate + S-adenosyl-L-methionine = carboxy-S-adenosyl-L-methionine + 3-phenylpyruvate + H2O. Functionally, catalyzes the conversion of S-adenosyl-L-methionine (SAM) to carboxy-S-adenosyl-L-methionine (Cx-SAM). The chain is Carboxy-S-adenosyl-L-methionine synthase from Sodalis glossinidius (strain morsitans).